The chain runs to 524 residues: Dihydromonacolin L monooxygenase mokC (524 aa).

Topologically, residues 1-25 are cytoplasmic; the sequence is MTVPTDTVSRRLQSLAWSDIKQHAP. A helical; Signal-anchor for type II membrane protein transmembrane segment spans residues 26–47; it reads WLPSSRTLVSGFLCLILLQILY. Residues 48–524 are Lumenal-facing; it reads SRGRKSDLRV…LMMRRRDEDL (477 aa). Asn-396 and Asn-401 each carry an N-linked (GlcNAc...) asparagine glycan. Cys-467 serves as a coordination point for heme.

It belongs to the cytochrome P450 family. It depends on heme as a cofactor.

Its subcellular location is the endoplasmic reticulum membrane. The catalysed reaction is dihydromonacolin L carboxylate + reduced [NADPH--hemoprotein reductase] + O2 = monacolin L carboxylate + oxidized [NADPH--hemoprotein reductase] + 2 H2O + H(+). It catalyses the reaction monacolin L carboxylate + reduced [NADPH--hemoprotein reductase] + O2 = monacolin J carboxylate + oxidized [NADPH--hemoprotein reductase] + H2O + H(+). Its pathway is polyketide biosynthesis; lovastatin biosynthesis. Functionally, cytochrome P450 monooxygenase; part of the gene cluster that mediates the biosynthesis of monakolin K, also known as lovastatin, and which acts as a potent competitive inhibitor of HMG-CoA reductase. Monakolin K biosynthesis is performed in two stages. The first stage is catalyzed by the nonaketide synthase mokA, which belongs to type I polyketide synthases and catalyzes the iterative nine-step formation of the polyketide. This PKS stage is completed by the action of dehydrogenase mokE, which catalyzes the NADPH-dependent reduction of the unsaturated tetra-, penta- and heptaketide intermediates that arise during the mokA-mediated biosynthesis of the nonaketide chain and leads to dihydromonacolin L. Covalently bound dihydromonacolin L is released from mokA by the mokD esterase. Conversion of dihydromonacolin L into monacolin L and then monacolin J is subsequently performed with the participation of molecular oxygen and P450 monoogygenase mokC. Finally, mokF performs the conversion of monacoline J to monacoline K through the addition of the side-chain diketide moiety (2R)-2-methylbutanoate produced by the diketide synthase mokB. This Monascus pilosus (Red mold) protein is Dihydromonacolin L monooxygenase mokC.